The chain runs to 101 residues: Small ribosomal subunit protein uS14 (101 aa).

It belongs to the universal ribosomal protein uS14 family. As to quaternary structure, part of the 30S ribosomal subunit. Contacts proteins S3 and S10.

In terms of biological role, binds 16S rRNA, required for the assembly of 30S particles and may also be responsible for determining the conformation of the 16S rRNA at the A site. This Ehrlichia ruminantium (strain Welgevonden) protein is Small ribosomal subunit protein uS14.